A 255-amino-acid chain; its full sequence is High-affinity branched-chain amino acid transport ATP-binding protein LivG (255 aa).

The ABC transporter domain occupies 6–254 (LAVNGLMMRF…PDVIRAYLGE (249 aa)). Residue 38–45 (GPNGAGKT) participates in ATP binding.

This sequence belongs to the ABC transporter superfamily.

Component of the high-affinity branched-chain amino acid transport system. The protein is High-affinity branched-chain amino acid transport ATP-binding protein LivG (livG) of Salmonella typhi.